The sequence spans 427 residues: Mitogen-activated protein kinase 8B (427 aa).

The Protein kinase domain maps to 26-321 (YQNLRPIGSG…VDEALQHPYI (296 aa)). ATP contacts are provided by residues 33–40 (GSGAQGIV) and lysine 55. Aspartate 151 functions as the Proton acceptor in the catalytic mechanism. Phosphothreonine is present on threonine 183. The TXY signature appears at 183–185 (TPY). Tyrosine 185 carries the phosphotyrosine modification. The segment at 372 to 427 (IRGQPSPIGAAVINGSPQPSSSSSINDVSSMSTEPTVASDTDSSLEASAGPLSCCR) is disordered. Over residues 387–403 (SPQPSSSSSINDVSSMS) the composition is skewed to low complexity. The span at 404-417 (TEPTVASDTDSSLE) shows a compositional bias: polar residues.

Belongs to the protein kinase superfamily. CMGC Ser/Thr protein kinase family. MAP kinase subfamily. Requires Mg(2+) as cofactor. In terms of processing, dually phosphorylated on Thr-183 and Tyr-185, which activates the enzyme. As to expression, expressed at high levels in the ovary and at lower levels in brain, gill, heart, spleen, liver, kidney, muscle, bladder and gut.

The enzyme catalyses L-seryl-[protein] + ATP = O-phospho-L-seryl-[protein] + ADP + H(+). It catalyses the reaction L-threonyl-[protein] + ATP = O-phospho-L-threonyl-[protein] + ADP + H(+). With respect to regulation, activated by threonine and tyrosine phosphorylation. Responds to activation by environmental stress and pro-inflammatory cytokines by phosphorylating a number of transcription factors, primarily components of AP-1 such as c-Jun and ATF2 and thus regulates AP-1 transcriptional activity. May play a role in the regulation of the circadian clock. The chain is Mitogen-activated protein kinase 8B (mapk8b) from Cyprinus carpio (Common carp).